A 496-amino-acid chain; its full sequence is Apolipoprotein N-acyltransferase (496 aa).

6 consecutive transmembrane segments (helical) span residues 6-26 (IICFLLGILSGLVFAPTFFIP), 50-70 (FGYLFGFGHFLSGMYWISIGV), 77-97 (FWWAIPFALFGLPIILAFFIS), 114-134 (LIFCLLWVLFEWIRSWICTGL), 148-168 (ILIQPLSITGIYGLSFIVIYI), and 183-203 (LKILLASSMLILTVMVIYGAM). Residues 220–464 (VQPSIPQTAK…QGLIPQKLTT (245 aa)) enclose the CN hydrolase domain. Glutamate 259 functions as the Proton acceptor in the catalytic mechanism. Lysine 322 is an active-site residue. The active-site Nucleophile is cysteine 372. Residues 474–494 (FAMLLPIVFILLIHYLLSLIF) form a helical membrane-spanning segment.

This sequence belongs to the CN hydrolase family. Apolipoprotein N-acyltransferase subfamily.

The protein resides in the cell inner membrane. The enzyme catalyses N-terminal S-1,2-diacyl-sn-glyceryl-L-cysteinyl-[lipoprotein] + a glycerophospholipid = N-acyl-S-1,2-diacyl-sn-glyceryl-L-cysteinyl-[lipoprotein] + a 2-acyl-sn-glycero-3-phospholipid + H(+). It participates in protein modification; lipoprotein biosynthesis (N-acyl transfer). Its function is as follows. Catalyzes the phospholipid dependent N-acylation of the N-terminal cysteine of apolipoprotein, the last step in lipoprotein maturation. This chain is Apolipoprotein N-acyltransferase, found in Rickettsia typhi (strain ATCC VR-144 / Wilmington).